The following is a 569-amino-acid chain: Proline--tRNA ligase (569 aa).

The protein belongs to the class-II aminoacyl-tRNA synthetase family. ProS type 1 subfamily. As to quaternary structure, homodimer.

The protein resides in the cytoplasm. The enzyme catalyses tRNA(Pro) + L-proline + ATP = L-prolyl-tRNA(Pro) + AMP + diphosphate. Its function is as follows. Catalyzes the attachment of proline to tRNA(Pro) in a two-step reaction: proline is first activated by ATP to form Pro-AMP and then transferred to the acceptor end of tRNA(Pro). As ProRS can inadvertently accommodate and process non-cognate amino acids such as alanine and cysteine, to avoid such errors it has two additional distinct editing activities against alanine. One activity is designated as 'pretransfer' editing and involves the tRNA(Pro)-independent hydrolysis of activated Ala-AMP. The other activity is designated 'posttransfer' editing and involves deacylation of mischarged Ala-tRNA(Pro). The misacylated Cys-tRNA(Pro) is not edited by ProRS. This is Proline--tRNA ligase from Legionella pneumophila (strain Lens).